A 719-amino-acid chain; its full sequence is Plasmin and fibronectin-binding protein A (719 aa).

A signal peptide spans 1–45 (MLKIVKKLEVLMKYFVPNEVFSIRKLKVGTCSVLLAISILGSQGI). 2 disordered regions span residues 56 to 76 (PMATKESSNAITNDLDNSPTV) and 109 to 128 (IRSNSQLDNRTVESTVTSTN). 5 PbH1 repeats span residues 287–310 (SNNVTIKNVTFKDSYQGHAIQIAG), 362–384 (SENVTIQNSYFGKSDKSGELVTA), 397–419 (PSNIKILNNHFDNMMYAGVRFTG), 497–523 (VSDITVTKNVINNNSKETEQPNIELLR), and 525–546 (SDNLVVSENSIFGGKEGIVIED). A coiled-coil region spans residues 601 to 658 (NNLSDKNEKEKNKEEKQSNSNNVIDSNQKNGEFNSSKDNRQMNDKIDNKQDNKTEEVN). The segment covering 606–617 (KNEKEKNKEEKQ) has biased composition (basic and acidic residues). Residues 606-655 (KNEKEKNKEEKQSNSNNVIDSNQKNGEFNSSKDNRQMNDKIDNKQDNKTE) form a disordered region. Over residues 623 to 634 (VIDSNQKNGEFN) the composition is skewed to polar residues. Positions 635–655 (SSKDNRQMNDKIDNKQDNKTE) are enriched in basic and acidic residues. An LPXTG sorting signal motif is present at residues 685-689 (LPKTG). Thr688 bears the Pentaglycyl murein peptidoglycan amidated threonine mark. Residues 689-719 (GSNKIMELFLTVTGIGLLLTLKGLKYYGKDK) constitute a propeptide, removed by sortase.

It is found in the secreted. The protein localises to the cell wall. Acts as a fibronectin-dependent adhesin and invasin. Binds host (in this case human) fibronectin, plasmin, plasminogen, and human serum albumin. Where the bacteria adhere to human cells there is major recruitment of microvilli which seem to fuse to cover the streptococcal chains. Antibodies to this protein reduce bacterial growth in human blood. In Streptococcus pneumoniae (strain ATCC BAA-255 / R6), this protein is Plasmin and fibronectin-binding protein A (pfbA).